Reading from the N-terminus, the 299-residue chain is Protease HtpX homolog (299 aa).

Transmembrane regions (helical) follow at residues 16–36 (VMAA…YVFF) and 38–58 (SAIA…VLMI). His144 serves as a coordination point for Zn(2+). Glu145 is a catalytic residue. Position 148 (His148) interacts with Zn(2+). Transmembrane regions (helical) follow at residues 159–179 (IALA…NAFW) and 198–218 (VLLM…ASLV). Glu227 contributes to the Zn(2+) binding site.

Belongs to the peptidase M48B family. It depends on Zn(2+) as a cofactor.

It localises to the cell membrane. The protein is Protease HtpX homolog of Lactiplantibacillus plantarum (strain ATCC BAA-793 / NCIMB 8826 / WCFS1) (Lactobacillus plantarum).